A 561-amino-acid chain; its full sequence is FAD-binding monooxygenase tazF (561 aa).

FAD-binding positions include 74–77 (TWLD), 86–87 (DI), and Tyr92. 84 to 86 (GCD) lines the NADP(+) pocket. NADP(+) contacts are provided by residues 212–218 (NGSSALQ) and 235–236 (RH).

This sequence belongs to the FAD-binding monooxygenase family. The cofactor is FAD.

The protein operates within secondary metabolite biosynthesis. FAD-binding monooxygenase; part of the gene cluster that mediates the biosynthesis of azaterrilone A and other azaphilones, a class of fungal metabolites characterized by a highly oxygenated pyrano-quinone bicyclic core and exhibiting a broad range of bioactivities. The first step of the pathway begins with the non-reducing polyketide synthase tazA that assembles one acetyl-CoA starter unit, five malonyl-CoA units, and catalyzes a series of Claisen condensations, methylation, PT-mediated cyclization, and finally releases the first hexaketide precursor through the R-domain. The tazA product then undergoes reduction on its terminal ketone and the following pyran-ring formation by yet undetermined enzyme(s). Dehydration and enoyl reduction, possibly involving the trans-enoyl reductase tazE leads to the next intermediate. TazD is predicted as an acetyltransferase and might catalyze the acetylation steps leading to the synthesis of azaterrilone A. Azaterrilone A is not the final product of the taz pathway and both the highly reducing polyketide synthase tazB and the dual enzyme tazHJ catalyze late steps of the pathway, leading to the production of the 2 final stereoisomers that contain additional polyketide modification whose structures have still to be determined. This Aspergillus terreus (strain NIH 2624 / FGSC A1156) protein is FAD-binding monooxygenase tazF.